A 220-amino-acid polypeptide reads, in one-letter code: Deoxyribose-phosphate aldolase (220 aa).

Aspartate 89 acts as the Proton donor/acceptor in catalysis. Lysine 151 acts as the Schiff-base intermediate with acetaldehyde in catalysis. Catalysis depends on lysine 180, which acts as the Proton donor/acceptor.

This sequence belongs to the DeoC/FbaB aldolase family. DeoC type 1 subfamily.

Its subcellular location is the cytoplasm. The enzyme catalyses 2-deoxy-D-ribose 5-phosphate = D-glyceraldehyde 3-phosphate + acetaldehyde. It functions in the pathway carbohydrate degradation; 2-deoxy-D-ribose 1-phosphate degradation; D-glyceraldehyde 3-phosphate and acetaldehyde from 2-deoxy-alpha-D-ribose 1-phosphate: step 2/2. Catalyzes a reversible aldol reaction between acetaldehyde and D-glyceraldehyde 3-phosphate to generate 2-deoxy-D-ribose 5-phosphate. The protein is Deoxyribose-phosphate aldolase of Staphylococcus carnosus (strain TM300).